The sequence spans 251 residues: CDP-diacylglycerol pyrophosphatase (251 aa).

Residues 4 to 24 traverse the membrane as a helical segment; it reads AGLLFLVMIVIAVVAAGIGYW.

Belongs to the Cdh family.

The protein localises to the cell inner membrane. The catalysed reaction is a CDP-1,2-diacyl-sn-glycerol + H2O = a 1,2-diacyl-sn-glycero-3-phosphate + CMP + 2 H(+). The protein operates within phospholipid metabolism; CDP-diacylglycerol degradation; phosphatidate from CDP-diacylglycerol: step 1/1. The polypeptide is CDP-diacylglycerol pyrophosphatase (Escherichia coli (strain SE11)).